Consider the following 360-residue polypeptide: Phospho-N-acetylmuramoyl-pentapeptide-transferase (360 aa).

A run of 10 helical transmembrane segments spans residues 27–47 (GAVMTAMLVAFVFGPGIIEWL), 73–93 (TMGGIMILLGVGVATLLWADL), 98–118 (VWAVLLLTLGYGAIGFADDYL), 134–154 (LVAQVGMAVIAGLWIMLLGQG), 168–188 (LTFNLGWFYLPFAAFVMVGAS), 199–219 (GLAIVPVMIAAGVFMLIAYLV), 239–259 (LAVFCGAIVGAAVGFLWFNAP), 263–283 (VFMGDTGSLALGGALGAVSVV), 288–308 (IVLAIVGGLFVLETVSVIVQV), and 337–357 (TVVIRFWIIAMILAIVGLSTL).

Belongs to the glycosyltransferase 4 family. MraY subfamily. Mg(2+) is required as a cofactor.

Its subcellular location is the cell inner membrane. It carries out the reaction UDP-N-acetyl-alpha-D-muramoyl-L-alanyl-gamma-D-glutamyl-meso-2,6-diaminopimeloyl-D-alanyl-D-alanine + di-trans,octa-cis-undecaprenyl phosphate = di-trans,octa-cis-undecaprenyl diphospho-N-acetyl-alpha-D-muramoyl-L-alanyl-D-glutamyl-meso-2,6-diaminopimeloyl-D-alanyl-D-alanine + UMP. The protein operates within cell wall biogenesis; peptidoglycan biosynthesis. Its function is as follows. Catalyzes the initial step of the lipid cycle reactions in the biosynthesis of the cell wall peptidoglycan: transfers peptidoglycan precursor phospho-MurNAc-pentapeptide from UDP-MurNAc-pentapeptide onto the lipid carrier undecaprenyl phosphate, yielding undecaprenyl-pyrophosphoryl-MurNAc-pentapeptide, known as lipid I. This chain is Phospho-N-acetylmuramoyl-pentapeptide-transferase, found in Rhodospirillum rubrum (strain ATCC 11170 / ATH 1.1.1 / DSM 467 / LMG 4362 / NCIMB 8255 / S1).